The following is a 1279-amino-acid chain: ATP-dependent helicase/nuclease subunit A (1279 aa).

The 496-residue stretch at 4–499 (TKWTDEQRQA…VKLFKNFRSR (496 aa)) folds into the UvrD-like helicase ATP-binding domain. Residue 25 to 32 (AGAGAGKT) coordinates ATP. Residues 526–853 (EEALKVGASY…RIMSIHKSKG (328 aa)) enclose the UvrD-like helicase C-terminal domain.

This sequence belongs to the helicase family. AddA subfamily. In terms of assembly, heterodimer of AddA and AddB/RexB. Requires Mg(2+) as cofactor.

The catalysed reaction is Couples ATP hydrolysis with the unwinding of duplex DNA by translocating in the 3'-5' direction.. It carries out the reaction ATP + H2O = ADP + phosphate + H(+). Functionally, the heterodimer acts as both an ATP-dependent DNA helicase and an ATP-dependent, dual-direction single-stranded exonuclease. Recognizes the chi site generating a DNA molecule suitable for the initiation of homologous recombination. The AddA nuclease domain is required for chi fragment generation; this subunit has the helicase and 3' -&gt; 5' nuclease activities. This chain is ATP-dependent helicase/nuclease subunit A, found in Clostridium botulinum (strain ATCC 19397 / Type A).